The primary structure comprises 388 residues: Mannitol-1-phosphate 5-dehydrogenase (388 aa).

Position 5–16 (5–16 (AIQFGGGNIGRG)) interacts with NAD(+). The active site involves lysine 213.

It belongs to the mannitol dehydrogenase family. Monomer.

It catalyses the reaction D-mannitol 1-phosphate + NAD(+) = beta-D-fructose 6-phosphate + NADH + H(+). Catalyzes the NAD(H)-dependent interconversion of D-fructose 6-phosphate and D-mannitol 1-phosphate in the mannitol metabolic pathway. The protein is Mannitol-1-phosphate 5-dehydrogenase (mpdA) of Aspergillus fumigatus (strain CBS 144.89 / FGSC A1163 / CEA10) (Neosartorya fumigata).